Reading from the N-terminus, the 1414-residue chain is DNA-directed RNA polymerase subunit beta' (1414 aa).

Residues Cys70, Cys72, Cys85, and Cys88 each coordinate Zn(2+). Residues Asp460, Asp462, and Asp464 each coordinate Mg(2+). Zn(2+) contacts are provided by Cys819, Cys893, Cys900, and Cys903. A disordered region spans residues 1391–1414 (AEEAFDFGTPSAPAEEPQQHPAAE). Low complexity predominate over residues 1400–1414 (PSAPAEEPQQHPAAE).

Belongs to the RNA polymerase beta' chain family. As to quaternary structure, the RNAP catalytic core consists of 2 alpha, 1 beta, 1 beta' and 1 omega subunit. When a sigma factor is associated with the core the holoenzyme is formed, which can initiate transcription. It depends on Mg(2+) as a cofactor. Zn(2+) is required as a cofactor.

It carries out the reaction RNA(n) + a ribonucleoside 5'-triphosphate = RNA(n+1) + diphosphate. Its function is as follows. DNA-dependent RNA polymerase catalyzes the transcription of DNA into RNA using the four ribonucleoside triphosphates as substrates. The polypeptide is DNA-directed RNA polymerase subunit beta' (Burkholderia lata (strain ATCC 17760 / DSM 23089 / LMG 22485 / NCIMB 9086 / R18194 / 383)).